A 39-amino-acid polypeptide reads, in one-letter code: uncharacterized protein (39 aa).

This is an uncharacterized protein from Bacillus subtilis (strain 168).